The sequence spans 469 residues: Cytosolic beta-glucosidase (469 aa).

Substrate-binding residues include Q17, H120, and N164. Catalysis depends on E165, which acts as the Proton donor. Position 309 (Y309) interacts with substrate. E373 acts as the Nucleophile in catalysis. Substrate contacts are provided by residues W417 and 424 to 425 (EW).

It belongs to the glycosyl hydrolase 1 family. Klotho subfamily. May interact with NEU2. Post-translationally, the N-terminus is blocked. Present in small intestine (at protein level). Expressed in liver, small intestine, colon, spleen and kidney. Down-regulated in renal cell carcinomas and hepatocellular carcinomas.

It is found in the cytoplasm. The protein resides in the cytosol. The catalysed reaction is Hydrolysis of terminal, non-reducing beta-D-glucosyl residues with release of beta-D-glucose.. It catalyses the reaction a beta-D-glucosyl-(1&lt;-&gt;1')-N-acylsphing-4-enine + H2O = an N-acylsphing-4-enine + D-glucose. It carries out the reaction a beta-D-galactosyl-(1&lt;-&gt;1')-N-acylsphing-4-enine + H2O = an N-acylsphing-4-enine + D-galactose. The enzyme catalyses beta-D-glucosyl-(1&lt;-&gt;1)-sphing-4-enine + H2O = sphing-4-enine + D-glucose. The catalysed reaction is beta-D-glucosyl-(1&lt;-&gt;1)-N-octadecanoylsphing-4-enine + H2O = N-octadecanoylsphing-4-enine + D-glucose. It catalyses the reaction beta-D-galactosyl-(1&lt;-&gt;1)-sphing-4-enine + H2O = sphing-4-enine + D-galactose. It carries out the reaction beta-D-galactosyl-(1&lt;-&gt;1')-N-octadecanoylsphing-4-enine + H2O = N-octadecanoylsphing-4-enine + D-galactose. The enzyme catalyses a beta-D-xylosyl-(1&lt;-&gt;1')-N-acylsphing-4-enine + cholesterol = cholesteryl 3-beta-D-xyloside + an N-acylsphing-4-enine. With respect to regulation, inhibited by 2,4-dinitrophenyl-2-fluoro-2-deoxy-beta-D-glucopyranoside. Inhibited by sodium taurocholate. Inhibited by alpha-1-C-nonyl-DIX/AnDIX. The glucosylceramidase activity is slightly inhibited by conduritol B epoxide/CBE while the galactosylceramidase activity is not. Neutral cytosolic beta-glycosidase with a broad substrate specificity that could play a role in the catabolism of glycosylceramides. Has a significant glucosylceramidase activity in vitro. However, that activity is relatively low and its significance in vivo is not clear. Hydrolyzes galactosylceramides/GalCers, glucosylsphingosines/GlcSphs and galactosylsphingosines/GalSphs. However, the in vivo relevance of these activities is unclear. It can also hydrolyze a broad variety of dietary glycosides including phytoestrogens, flavonols, flavones, flavanones and cyanogens in vitro and could therefore play a role in the metabolism of xenobiotics. Possesses transxylosylase activity in vitro using xylosylated ceramides/XylCers (such as beta-D-xylosyl-(1&lt;-&gt;1')-N-acylsphing-4-enine) as xylosyl donors and cholesterol as acceptor. Could also play a role in the catabolism of cytosolic sialyl free N-glycans. This Homo sapiens (Human) protein is Cytosolic beta-glucosidase.